We begin with the raw amino-acid sequence, 237 residues long: CD99 antigen-like protein 2 (237 aa).

The N-terminal stretch at 1–25 (MVARLTAFLVCLVFSLATLVQRGYG) is a signal peptide. Residues 26-161 (DTDGFNLEDA…PGSGISTETG (136 aa)) lie on the Extracellular side of the membrane. The tract at residues 47–157 (DHFSTTTRRP…SNDDPGSGIS (111 aa)) is disordered. 2 stretches are compositionally biased toward low complexity: residues 51 to 66 (TTTR…ANPA) and 74 to 84 (TTTTRRPGTTR). Positions 102 to 111 (DDRNDLDGPK) are enriched in basic and acidic residues. The O-linked (Xyl...) (chondroitin sulfate) serine glycan is linked to S154. The helical transmembrane segment at 162–182 (TIAGVASALAMALIGAVSSYI) threads the bilayer. Residues 183–237 (SYQQKKFCFSIQQGLNADYVKGENLEAVVCEEPQVTYSKQETQSAEPPPPEPPRI) lie on the Cytoplasmic side of the membrane. Residues 218-227 (TYSKQETQSA) show a composition bias toward polar residues. The tract at residues 218–237 (TYSKQETQSAEPPPPEPPRI) is disordered. Over residues 228–237 (EPPPPEPPRI) the composition is skewed to pro residues.

Belongs to the CD99 family. Post-translationally, O-glycosylated. Highly expressed in the nervous system, including brain, dentate nucleus of hippocampus, granular and Purkinje cells of cerebellum, brain stem nucleus and choroid plexus. Expressed in peripheral blood T- and B-cells and neutrophils (at protein level). Almost undetectable in bone marrow-derived neutrophils (at protein level). Also expressed in thymocytes (at protein level) with higher expression in cortical thymocytes than in medullary thymocytes. Expressed at high levels in testis (mostly in germ cells and Sertoli cells) and ovary (mostly in granulosa cells). Expressed in lung, heart, kidney and liver (at protein level); however, expression in heart, kidney and liver seems restricted to endothelial cells (at protein level). Highly expressed in endothelial cells and to a lower level in vascular smooth muscle cells (at protein level). Low expression in spleen.

It is found in the cell membrane. It localises to the cell junction. The protein resides in the secreted. Its function is as follows. Plays a role in a late step of leukocyte extravasation helping cells to overcome the endothelial basement membrane. Acts at the same site as, but independently of, PECAM1. Homophilic adhesion molecule, but these interactions may not be required for cell aggregation. The sequence is that of CD99 antigen-like protein 2 (Cd99l2) from Mus musculus (Mouse).